The chain runs to 210 residues: Glycerol-3-phosphate acyltransferase (210 aa).

Transmembrane regions (helical) follow at residues 10–30 (ALIL…GIVI), 59–79 (PAAL…VLIA), 87–107 (AAQL…WLGF), 116–136 (FLGT…LTWL), and 161–181 (LLLG…LIFI).

The protein belongs to the PlsY family. As to quaternary structure, probably interacts with PlsX.

It is found in the cell inner membrane. It catalyses the reaction an acyl phosphate + sn-glycerol 3-phosphate = a 1-acyl-sn-glycero-3-phosphate + phosphate. Its pathway is lipid metabolism; phospholipid metabolism. In terms of biological role, catalyzes the transfer of an acyl group from acyl-phosphate (acyl-PO(4)) to glycerol-3-phosphate (G3P) to form lysophosphatidic acid (LPA). This enzyme utilizes acyl-phosphate as fatty acyl donor, but not acyl-CoA or acyl-ACP. The polypeptide is Glycerol-3-phosphate acyltransferase (Cereibacter sphaeroides (strain ATCC 17025 / ATH 2.4.3) (Rhodobacter sphaeroides)).